Consider the following 610-residue polypeptide: Lipoprotein LpqB (610 aa).

A signal peptide spans 1-27; it reads MGAEGGGRRRALRLGAYVGCGAVLLTG. A lipid anchor (N-palmitoyl cysteine) is attached at Cys28. Residue Cys28 is the site of S-diacylglycerol cysteine attachment.

This sequence belongs to the LpqB lipoprotein family.

The protein resides in the cell membrane. In Streptomyces avermitilis (strain ATCC 31267 / DSM 46492 / JCM 5070 / NBRC 14893 / NCIMB 12804 / NRRL 8165 / MA-4680), this protein is Lipoprotein LpqB.